A 544-amino-acid chain; its full sequence is Chaperonin GroEL 2 (544 aa).

ATP-binding positions include 29 to 32, 86 to 90, glycine 413, 479 to 481, and aspartate 495; these read TLGP, DGTTT, and NAA.

This sequence belongs to the chaperonin (HSP60) family. As to quaternary structure, forms a cylinder of 14 subunits composed of two heptameric rings stacked back-to-back. Interacts with the co-chaperonin GroES.

The protein resides in the cytoplasm. The enzyme catalyses ATP + H2O + a folded polypeptide = ADP + phosphate + an unfolded polypeptide.. In terms of biological role, together with its co-chaperonin GroES, plays an essential role in assisting protein folding. The GroEL-GroES system forms a nano-cage that allows encapsulation of the non-native substrate proteins and provides a physical environment optimized to promote and accelerate protein folding. This chain is Chaperonin GroEL 2, found in Synechococcus sp. (strain WH7803).